Consider the following 96-residue polypeptide: UPF0213 protein BCE33L0031 (96 aa).

The GIY-YIG domain occupies 4–79 (NKHCFYVVEC…KQLNRKQKEE (76 aa)).

This sequence belongs to the UPF0213 family.

The sequence is that of UPF0213 protein BCE33L0031 from Bacillus cereus (strain ZK / E33L).